The primary structure comprises 55 residues: Large ribosomal subunit protein bL33 (55 aa).

The protein belongs to the bacterial ribosomal protein bL33 family.

The chain is Large ribosomal subunit protein bL33 from Azoarcus sp. (strain BH72).